The primary structure comprises 759 residues: TIR domain-containing adapter molecule 1 (759 aa).

Residues 1–153 are TRIF-NTD; it reads MACTGPSLSG…CGWDVLGDLG (153 aa). A TRAF6-binding motif is present at residues 84 to 91; the sequence is ETPEEPPD. The pLxIS motif signature appears at 207–210; sequence LEIS. At Ser-210 the chain carries Phosphoserine. Residue Lys-229 forms a Glycyl lysine isopeptide (Lys-Gly) (interchain with G-Cter in ubiquitin) linkage. The tract at residues 241 to 296 is disordered; sequence EPAPMGCQEPEEMSWPPSVEAADSPVRPSSPGPGLPEVTTDACPASPHDPPEVPEI. Short sequence motifs (TRAF6-binding) lie at residues 248 to 255 and 299 to 309; these read QEPEEMSW and HYPVECTDVPA. A disordered region spans residues 340 to 426; sequence LSAQPRPPTP…PEPPPPELES (87 aa). Residues 351 to 365 are compositionally biased toward low complexity; that stretch reads VPQTSPSFPSASTSP. The span at 366-376 shows a compositional bias: pro residues; that stretch reads FPSPSTPPEAH. Residues 430–590 enclose the TIR domain; the sequence is KFYNFVVLHA…QDARALREQS (161 aa). Residues 549-759 are sufficient to induce apoptosis; sequence LLDEHSKIFA…APEDNTRETE (211 aa). The segment at 642–723 is disordered; sequence GQGSLGTPPS…PPARPQSPGL (82 aa). Residues 659–705 show a composition bias toward pro residues; sequence HQPPPLPPWLGGTPPPIFPQPPQTFPQPPPTFPQPPPTFQQPPPACP.

Homodimer. Found in a multi-helicase-TICAM1 complex at least composed of DHX36, DDX1, DDX21 and TICAM1; this complex exists in resting cells with or without poly(I:C) RNA ligand stimulation. Interacts (via TIR domain) with DDX21 (via C-terminus). Interacts (via TIR domain) with DHX36 (via C-terminus). Interacts with AZI2 and IRF7. Interacts with TICAM2 in TLR4 recruitment. Interaction with PIAS4 inhibits the TICAM1-induced NF-kappa-B, IRF and IFNB1 activation. Interacts with IKBKB and IKBKE. Interaction with SARM1 blocks TICAM1-dependent transcription factor activation. Interacts with TRAF3. Interacts (when phosphorylated) with IRF3; following activation and phosphorylation on the pLxIS motif by TBK1, recruits IRF3. Interacts with TBK1, TRAF6 and RIPK1 and these interactions are enhanced in the presence of WDFY1. Interacts with TRAFD1. Interacts with UBQLN1 (via UBA domain). Interacts with TLR4 in response to LPS in a WDFY1-dependent manner. Interacts with WDFY1 in response to poly(I:C). Interacts (via the TIR domain) with TLR3 in response to poly(I:C) and this interaction is enhanced in the presence of WDFY1. Interacts with TRIM56. Component of a multi-helicase-TICAM1 complex that acts as a cytoplasmic sensor of viral double-stranded RNA (dsRNA) and plays a role in the activation of a cascade of antiviral responses including the induction of pro-inflammatory cytokines. Interacts (via the TIR domain) with TLR5. Interacts with TRIM8. Interacts with TAX1BP1 and TRIM32; these interactions target TICAM1 to TAX1BP1-mediated selective autophagic degradation. Interacts with DDX50. In terms of processing, phosphorylated by TBK1. Following activation, phosphorylated by TBK1 at Ser-210 in the pLxIS motif. The phosphorylated pLxIS motif constitutes an IRF3-binding motif, leading to recruitment of the transcription factor IRF3 to induce type-I interferons and other cytokines. Polyubiquitinated at Lys-229 by TRIM38 with 'Lys-48'-linked chains, leading to proteasomal degradation. Polyubiquitinated with 'Lys-6' and 'Lys-33'-linked chains in a TRIM8-dependent manner.

Its subcellular location is the cytoplasmic vesicle. The protein resides in the autophagosome. It is found in the cytoplasm. The protein localises to the cytosol. It localises to the mitochondrion. In terms of biological role, involved in innate immunity against invading pathogens. Adapter used by TLR3, TLR4 (through TICAM2) and TLR5 to mediate NF-kappa-B and interferon-regulatory factor (IRF) activation, and to induce apoptosis. Ligand binding to these receptors results in TRIF recruitment through its TIR domain. Distinct protein-interaction motifs allow recruitment of the effector proteins TBK1, TRAF6 and RIPK1, which in turn, lead to the activation of transcription factors IRF3 and IRF7, NF-kappa-B and FADD respectively. Phosphorylation by TBK1 on the pLxIS motif leads to recruitment and subsequent activation of the transcription factor IRF3 to induce expression of type I interferon and exert a potent immunity against invading pathogens. Component of a multi-helicase-TICAM1 complex that acts as a cytoplasmic sensor of viral double-stranded RNA (dsRNA) and plays a role in the activation of a cascade of antiviral responses including the induction of pro-inflammatory cytokines. The protein is TIR domain-containing adapter molecule 1 (TICAM1) of Bos taurus (Bovine).